The sequence spans 409 residues: MSRESLYISACHPYEGSMAENHTHWLRKENTDQTKASFPELFFDLVFVFALIQLSESLSDDFSLGIAAEAVLFIFALWWVWIHTTWVMDLLDTEIEPVRLLLFTLMFFGIVMAIALPEAFKGMGLLFAVAYSAMQVSRSLFALYAFRRGDPASFMTFFRITAWLTISSTFWITGGLSEPHLRVVLWIVALVVEYTGPTVRYWVPLIGASPRETLDIDGEHLAERSALFVIIALGETILTIGKHTFSNLETEGTPWVLCFSFLTTVLMWWIYFHDGQQRAADKAEDTSKPQTTAQYLFTYGHLPIVGGIIFTAVGEDFSLAHPYQLGTYNFALAQLGGPILFLAGTMWMKRVSSRVLPYSHVFGISLLTASFTLVPFVANFAIQALTGVILLVVAVWEYVALKHLRRSAA.

Helical transmembrane passes span 62 to 82 (FSLG…WVWI), 100 to 120 (LLLF…PEAF), 123 to 143 (MGLL…LFAL), 152 to 172 (ASFM…TFWI), 183 to 203 (VVLW…RYWV), 252 to 272 (GTPW…WIYF), 293 to 313 (AQYL…FTAV), 328 to 348 (YNFA…TMWM), 355 to 375 (VLPY…TLVP), and 376 to 396 (FVAN…VAVW).

It is found in the cell membrane. This is an uncharacterized protein from Rhizobium meliloti (strain 1021) (Ensifer meliloti).